The following is a 207-amino-acid chain: 3,4-dihydroxy-2-butanone 4-phosphate synthase (207 aa).

Residues 28–29 (RE), Asp-33, 140–144 (RRGHT), and Glu-164 contribute to the D-ribulose 5-phosphate site. Glu-29 is a Mg(2+) binding site. His-143 provides a ligand contact to Mg(2+).

The protein belongs to the DHBP synthase family. As to quaternary structure, homodimer. The cofactor is Mg(2+). Requires Mn(2+) as cofactor.

The catalysed reaction is D-ribulose 5-phosphate = (2S)-2-hydroxy-3-oxobutyl phosphate + formate + H(+). It participates in cofactor biosynthesis; riboflavin biosynthesis; 2-hydroxy-3-oxobutyl phosphate from D-ribulose 5-phosphate: step 1/1. Functionally, catalyzes the conversion of D-ribulose 5-phosphate to formate and 3,4-dihydroxy-2-butanone 4-phosphate. In Oceanobacillus iheyensis (strain DSM 14371 / CIP 107618 / JCM 11309 / KCTC 3954 / HTE831), this protein is 3,4-dihydroxy-2-butanone 4-phosphate synthase.